A 323-amino-acid chain; its full sequence is Putative ABC transporter substrate-binding lipoprotein YhfQ (323 aa).

The N-terminal stretch at 1–19 (MKKTLIILTVLLLSVLTAA) is a signal peptide. Cys-20 is lipidated: N-palmitoyl cysteine. Cys-20 is lipidated: S-diacylglycerol cysteine. A Fe/B12 periplasmic-binding domain is found at 51 to 322 (RVVVLELGFI…ELQKEMPAAK (272 aa)).

It belongs to the bacterial solute-binding protein 8 family. Interacts with FloT.

The protein localises to the cell membrane. The protein resides in the membrane raft. The polypeptide is Putative ABC transporter substrate-binding lipoprotein YhfQ (yhfQ) (Bacillus subtilis (strain 168)).